We begin with the raw amino-acid sequence, 742 residues long: 5-methyltetrahydropteroyltriglutamate--homocysteine methyltransferase (742 aa).

Residues 18 to 21 and lysine 112 contribute to the 5-methyltetrahydropteroyltri-L-glutamate site; that span reads REWK. Residues 420–422 and glutamate 473 each bind L-homocysteine; that span reads IGS. L-methionine-binding positions include 420 to 422 and glutamate 473; that span reads IGS. Tryptophan 550 is a 5-methyltetrahydropteroyltri-L-glutamate binding site. L-homocysteine is bound at residue aspartate 588. Aspartate 588 lines the L-methionine pocket. Glutamate 594 provides a ligand contact to 5-methyltetrahydropteroyltri-L-glutamate. 3 residues coordinate Zn(2+): histidine 630, cysteine 632, and glutamate 654. Residue histidine 683 is the Proton donor of the active site. Cysteine 715 is a binding site for Zn(2+).

The protein belongs to the vitamin-B12 independent methionine synthase family. Requires Zn(2+) as cofactor.

It catalyses the reaction 5-methyltetrahydropteroyltri-L-glutamate + L-homocysteine = tetrahydropteroyltri-L-glutamate + L-methionine. The protein operates within amino-acid biosynthesis; L-methionine biosynthesis via de novo pathway; L-methionine from L-homocysteine (MetE route): step 1/1. Functionally, catalyzes the transfer of a methyl group from 5-methyltetrahydrofolate to homocysteine resulting in methionine formation. The sequence is that of 5-methyltetrahydropteroyltriglutamate--homocysteine methyltransferase from Staphylococcus aureus (strain MRSA252).